A 179-amino-acid polypeptide reads, in one-letter code: D-glycero-beta-D-manno-heptose-1,7-bisphosphate 7-phosphatase (179 aa).

Residue Asp-7 is the Nucleophile of the active site. Mg(2+)-binding residues include Asp-7 and Asp-9. Asp-7 contributes to the substrate binding site. The active-site Proton donor is the Asp-9. Substrate contacts are provided by residues 15–19 (DSDAF), 50–53 (TNQS), and Arg-57. Residues Cys-89, His-91, Cys-97, and Cys-99 each contribute to the Zn(2+) site. Arg-100 contributes to the substrate binding site. Mg(2+) is bound at residue Asp-126. Arg-129 is a binding site for substrate.

In terms of assembly, monomer. The cofactor is Mg(2+). Zn(2+) serves as cofactor.

It is found in the cytoplasm. It carries out the reaction D-glycero-beta-D-manno-heptose 1,7-bisphosphate + H2O = D-glycero-beta-D-manno-heptose 1-phosphate + phosphate. It participates in nucleotide-sugar biosynthesis; ADP-L-glycero-beta-D-manno-heptose biosynthesis; ADP-L-glycero-beta-D-manno-heptose from D-glycero-beta-D-manno-heptose 7-phosphate: step 2/4. The protein operates within bacterial outer membrane biogenesis; LPS core biosynthesis. Converts the D-glycero-beta-D-manno-heptose 1,7-bisphosphate (beta-HBP) intermediate into D-glycero-beta-D-manno-heptose 1-phosphate by removing the phosphate group at the C-7 position. In Bordetella bronchiseptica (strain ATCC BAA-588 / NCTC 13252 / RB50) (Alcaligenes bronchisepticus), this protein is D-glycero-beta-D-manno-heptose-1,7-bisphosphate 7-phosphatase.